The chain runs to 61 residues: Small ribosomal subunit protein uS14 (61 aa).

Residues Cys24, Cys27, Cys40, and Cys43 each contribute to the Zn(2+) site.

It belongs to the universal ribosomal protein uS14 family. Zinc-binding uS14 subfamily. As to quaternary structure, part of the 30S ribosomal subunit. Contacts proteins S3 and S10. It depends on Zn(2+) as a cofactor.

In terms of biological role, binds 16S rRNA, required for the assembly of 30S particles and may also be responsible for determining the conformation of the 16S rRNA at the A site. In Caldanaerobacter subterraneus subsp. tengcongensis (strain DSM 15242 / JCM 11007 / NBRC 100824 / MB4) (Thermoanaerobacter tengcongensis), this protein is Small ribosomal subunit protein uS14.